The primary structure comprises 96 residues: Large ribosomal subunit protein uL4 (96 aa).

Residues 77 to 96 (RAPNKKVKRRELKKNPLKNL) are disordered. The span at 79–96 (PNKKVKRRELKKNPLKNL) shows a compositional bias: basic residues.

It belongs to the universal ribosomal protein uL4 family. As to quaternary structure, component of the large ribosomal subunit.

It is found in the cytoplasm. Its function is as follows. Component of the large ribosomal subunit. The ribosome is a large ribonucleoprotein complex responsible for the synthesis of proteins in the cell. This is Large ribosomal subunit protein uL4 (rpl4) from Xenopus tropicalis (Western clawed frog).